A 416-amino-acid chain; its full sequence is Protein LAZY 1 (416 aa).

A helical membrane pass occupies residues 63 to 83 (FTFGGSGLLTIGTLGIAAVAI). Residues 69-75 (GLLTIGT) carry the IGT motif motif. 2 disordered regions span residues 266–306 (AAAA…GMPA) and 337–361 (KKSRNRGATDNGGGAVATGDPDGPL). Gly residues predominate over residues 270 to 282 (GVGGDRAGKGGGY). Residues 278-295 (KGGGYKTMKKRKVKDEKG) carry the Nuclear localization signal motif.

It belongs to the LAZY family. In terms of tissue distribution, expressed specifically in the cells at the inner side of the vascular bundles of young leaf sheaths and peripheral cylinders of vascular bundles in the unelongated stems. Expressed in the leaf sheath pulvinus and the lamina joint.

It localises to the cell membrane. The protein resides in the nucleus. Involved in the regulation of shoot gravitropism and tiller angle through negative regulation of basipetal polar auxin transport (PAT). Acts as positive regulator of lateral auxin transport. Promotes vertical shoot growth. LAZY1 and TAC1 play opposite functions in the regulation of tiller growth angle. The chain is Protein LAZY 1 from Oryza sativa subsp. japonica (Rice).